The primary structure comprises 68 residues: Glu S.griseus protease inhibitor (68 aa).

Serine 1 is subject to N-acetylserine. The cysteines at positions 3 and 48 are disulfide-linked.

It belongs to the protease inhibitor I13 (potato type I serine protease inhibitor) family.

Competitively inhibits Glu S.griseus protease by forming probably a 1:1 complex. BGIA has no inhibitory activity against 2 other acidic amino acid-specific endopeptidases (S.aureus protease V8 and B.subtilis proteinase), chymotrypsin, trypsin, pancreatic elastase, and papain, although subtilisin Carlsberg was strongly inhibited. In Momordica charantia (Bitter gourd), this protein is Glu S.griseus protease inhibitor.